The primary structure comprises 103 residues: Phosphoribosyl-ATP pyrophosphatase (103 aa).

The protein belongs to the PRA-PH family.

The protein localises to the cytoplasm. The catalysed reaction is 1-(5-phospho-beta-D-ribosyl)-ATP + H2O = 1-(5-phospho-beta-D-ribosyl)-5'-AMP + diphosphate + H(+). It participates in amino-acid biosynthesis; L-histidine biosynthesis; L-histidine from 5-phospho-alpha-D-ribose 1-diphosphate: step 2/9. The sequence is that of Phosphoribosyl-ATP pyrophosphatase (hisE) from Listeria monocytogenes serovar 1/2a (strain ATCC BAA-679 / EGD-e).